Here is a 427-residue protein sequence, read N- to C-terminus: Glutamate-1-semialdehyde 2,1-aminomutase (427 aa).

The residue at position 268 (Lys268) is an N6-(pyridoxal phosphate)lysine.

Belongs to the class-III pyridoxal-phosphate-dependent aminotransferase family. HemL subfamily. Pyridoxal 5'-phosphate serves as cofactor.

It is found in the cytoplasm. It carries out the reaction (S)-4-amino-5-oxopentanoate = 5-aminolevulinate. The protein operates within porphyrin-containing compound metabolism; protoporphyrin-IX biosynthesis; 5-aminolevulinate from L-glutamyl-tRNA(Glu): step 2/2. This Methanococcus maripaludis (strain C5 / ATCC BAA-1333) protein is Glutamate-1-semialdehyde 2,1-aminomutase.